Here is a 266-residue protein sequence, read N- to C-terminus: Indole-3-glycerol phosphate synthase (266 aa).

The protein belongs to the TrpC family.

It carries out the reaction 1-(2-carboxyphenylamino)-1-deoxy-D-ribulose 5-phosphate + H(+) = (1S,2R)-1-C-(indol-3-yl)glycerol 3-phosphate + CO2 + H2O. It participates in amino-acid biosynthesis; L-tryptophan biosynthesis; L-tryptophan from chorismate: step 4/5. The sequence is that of Indole-3-glycerol phosphate synthase from Paracidovorax citrulli (strain AAC00-1) (Acidovorax citrulli).